The chain runs to 242 residues: ATP synthase subunit a (242 aa).

The next 6 helical transmembrane spans lie at 29 to 49 (SSIYMLLASILALTYFYLAFY), 84 to 104 (FIPLVFSLFIFILFCNLLGMT), 114 to 134 (IIVTFTLAILVFLMVTIVGFV), 140 to 160 (FLTLFLPHGTPLWLAPLMIVI), 181 to 201 (MAGHVLLKVIAGFTVSLMIYL), and 203 to 223 (FLPIPIMVILIGFEIFVAILQ).

This sequence belongs to the ATPase A chain family. As to quaternary structure, F-type ATPases have 2 components, CF(1) - the catalytic core - and CF(0) - the membrane proton channel. CF(1) has five subunits: alpha(3), beta(3), gamma(1), delta(1), epsilon(1). CF(0) has three main subunits: a(1), b(2) and c(9-12). The alpha and beta chains form an alternating ring which encloses part of the gamma chain. CF(1) is attached to CF(0) by a central stalk formed by the gamma and epsilon chains, while a peripheral stalk is formed by the delta and b chains.

It localises to the cell inner membrane. Key component of the proton channel; it plays a direct role in the translocation of protons across the membrane. The sequence is that of ATP synthase subunit a from Rickettsia conorii (strain ATCC VR-613 / Malish 7).